A 455-amino-acid polypeptide reads, in one-letter code: 3-isopropylmalate dehydratase large subunit (455 aa).

The [4Fe-4S] cluster site is built by Cys337, Cys397, and Cys400.

It belongs to the aconitase/IPM isomerase family. LeuC type 1 subfamily. As to quaternary structure, heterodimer of LeuC and LeuD. It depends on [4Fe-4S] cluster as a cofactor.

The catalysed reaction is (2R,3S)-3-isopropylmalate = (2S)-2-isopropylmalate. Its pathway is amino-acid biosynthesis; L-leucine biosynthesis; L-leucine from 3-methyl-2-oxobutanoate: step 2/4. Catalyzes the isomerization between 2-isopropylmalate and 3-isopropylmalate, via the formation of 2-isopropylmaleate. The chain is 3-isopropylmalate dehydratase large subunit from Leuconostoc citreum (strain KM20).